An 85-amino-acid polypeptide reads, in one-letter code: Small ribosomal subunit protein bS16 (85 aa).

It belongs to the bacterial ribosomal protein bS16 family.

This Clostridium kluyveri (strain NBRC 12016) protein is Small ribosomal subunit protein bS16.